Consider the following 427-residue polypeptide: Glutamyl-tRNA reductase (427 aa).

Residues 49 to 52, S109, 114 to 116, and Q120 each bind substrate; these read TCNR and EGQ. C50 functions as the Nucleophile in the catalytic mechanism. 188–193 contributes to the NADP(+) binding site; that stretch reads GAGKMA.

The protein belongs to the glutamyl-tRNA reductase family. In terms of assembly, homodimer.

The catalysed reaction is (S)-4-amino-5-oxopentanoate + tRNA(Glu) + NADP(+) = L-glutamyl-tRNA(Glu) + NADPH + H(+). The protein operates within porphyrin-containing compound metabolism; protoporphyrin-IX biosynthesis; 5-aminolevulinate from L-glutamyl-tRNA(Glu): step 1/2. It participates in porphyrin-containing compound metabolism; chlorophyll biosynthesis. Its activity is regulated as follows. Feedback inhibition by heme. Catalyzes the NADPH-dependent reduction of glutamyl-tRNA(Glu) to glutamate 1-semialdehyde (GSA). The sequence is that of Glutamyl-tRNA reductase from Synechocystis sp. (strain ATCC 27184 / PCC 6803 / Kazusa).